A 461-amino-acid polypeptide reads, in one-letter code: Argininosuccinate lyase (461 aa).

Belongs to the lyase 1 family. Argininosuccinate lyase subfamily.

The protein resides in the cytoplasm. The catalysed reaction is 2-(N(omega)-L-arginino)succinate = fumarate + L-arginine. It functions in the pathway amino-acid biosynthesis; L-arginine biosynthesis; L-arginine from L-ornithine and carbamoyl phosphate: step 3/3. The protein is Argininosuccinate lyase of Chloroflexus aurantiacus (strain ATCC 29366 / DSM 635 / J-10-fl).